A 267-amino-acid chain; its full sequence is 2-oxoglutarate synthase subunit KorB (267 aa).

In terms of assembly, heterotetramer of the KorA, KorB, KorC and KorD subunits.

It carries out the reaction 2 oxidized [2Fe-2S]-[ferredoxin] + 2-oxoglutarate + CoA = succinyl-CoA + 2 reduced [2Fe-2S]-[ferredoxin] + CO2 + H(+). This Archaeoglobus fulgidus (strain ATCC 49558 / DSM 4304 / JCM 9628 / NBRC 100126 / VC-16) protein is 2-oxoglutarate synthase subunit KorB (korB).